Here is a 308-residue protein sequence, read N- to C-terminus: 4-hydroxyproline 2-epimerase (308 aa).

The active-site Proton acceptor is C88. Substrate-binding positions include 89–90 (GH), H208, and D232. The active-site Proton donor is C236. 237–238 (GT) serves as a coordination point for substrate.

It belongs to the proline racemase family.

The catalysed reaction is trans-4-hydroxy-L-proline = cis-4-hydroxy-D-proline. In terms of biological role, catalyzes the reversible epimerization of cis-4-hydroxy-D-proline (c4DHyp) to trans-4-hydroxy-L-proline (t4LHyp). May be involved in a degradation pathway that allows P.putida strain KT2440 to grow on either epimer of 4-hydroxyproline, c4DHyp and t4LHyp, as the sole carbon and nitrogen source. Does not exhibit measureable racemase activity in vitro with any of the 19 natural chiral amino acid enantiomers. The sequence is that of 4-hydroxyproline 2-epimerase from Pseudomonas putida (strain ATCC 47054 / DSM 6125 / CFBP 8728 / NCIMB 11950 / KT2440).